Here is a 426-residue protein sequence, read N- to C-terminus: Histidine--tRNA ligase (426 aa).

Belongs to the class-II aminoacyl-tRNA synthetase family. Homodimer.

Its subcellular location is the cytoplasm. It catalyses the reaction tRNA(His) + L-histidine + ATP = L-histidyl-tRNA(His) + AMP + diphosphate + H(+). In Streptococcus pyogenes serotype M49 (strain NZ131), this protein is Histidine--tRNA ligase.